We begin with the raw amino-acid sequence, 463 residues long: Rop guanine nucleotide exchange factor 4 (463 aa).

Disordered regions lie at residues 1–25 and 55–87; these read MESS…YRRT and GHEE…SDID. The segment covering 59–68 has biased composition (acidic residues); the sequence is DVSEDAEEPK. Over residues 69 to 78 the composition is skewed to basic and acidic residues; that stretch reads DDVVNDVHGD. In terms of domain architecture, PRONE spans 84–463; it reads SDIDSAEDAE…VDRTVRNRDD (380 aa).

Interacts with ARAC10/ROP11. In terms of tissue distribution, expressed in root vascular tissue and trichoblast cell files. Expressed in root metaxylem cell files. Expressed in guard cells of cotyledons, rosette leaves, sepals, petal, stigmas and siliques. Expressed in root metaxylem cell files.

The protein resides in the cytoplasm. Its subcellular location is the cell membrane. Its function is as follows. Guanine-nucleotide exchange factor (GEF) that acts as an activator of Rop (Rho of plants) GTPases by promoting the exchange of GDP for GTP. In association with ROPGEF1, acts as a specific regulator of ARAC10/ROP11 function in ABA-mediated stomatal closure. The protein is Rop guanine nucleotide exchange factor 4 (ROPGEF4) of Arabidopsis thaliana (Mouse-ear cress).